Here is a 171-residue protein sequence, read N- to C-terminus: UPF0303 protein YPK_1581 (171 aa).

The protein belongs to the UPF0303 family.

This Yersinia pseudotuberculosis serotype O:3 (strain YPIII) protein is UPF0303 protein YPK_1581.